Reading from the N-terminus, the 267-residue chain is Methylglyoxal reductase DkgB (267 aa).

Residue Y39 is the Proton donor of the active site. Substrate is bound at residue H97. Residue 179–231 (MTLAYGKALKDEVIARIAVKHNATPVQVILAWAMGEGYSVIPSSTRRENLASN) coordinates NADP(+).

This sequence belongs to the aldo/keto reductase family. Monomer.

The protein resides in the cytoplasm. It catalyses the reaction hydroxyacetone + NADP(+) = methylglyoxal + NADPH + H(+). Aldo-keto reductase that significantly contributes to cellular methylglyoxal detoxification by catalyzing the NADPH-dependent conversion of methylglyoxal to acetol. This is Methylglyoxal reductase DkgB from Salmonella typhi.